Reading from the N-terminus, the 142-residue chain is Large-conductance mechanosensitive channel (142 aa).

Transmembrane regions (helical) follow at residues 19 to 39 (VGII…ADLV), 41 to 61 (PFIA…ALDG), and 78 to 98 (FAFG…FVVF).

It belongs to the MscL family. Homopentamer.

The protein resides in the cell inner membrane. In terms of biological role, channel that opens in response to stretch forces in the membrane lipid bilayer. May participate in the regulation of osmotic pressure changes within the cell. In Roseobacter denitrificans (strain ATCC 33942 / OCh 114) (Erythrobacter sp. (strain OCh 114)), this protein is Large-conductance mechanosensitive channel.